The primary structure comprises 381 residues: Cytochrome b (381 aa).

4 helical membrane-spanning segments follow: residues 34–54, 78–99, 114–134, and 179–199; these read FGSL…FLAM, WLIR…YLHI, WNIG…GYVL, and FFAF…IHLL. Residues His-84 and His-98 each coordinate heme b. Positions 183 and 197 each coordinate heme b. His-202 is an a ubiquinone binding site. A run of 4 helical transmembrane segments spans residues 227–247, 289–309, 321–341, and 348–368; these read YKDL…ALFM, LGGV…PLLH, LTQI…WIGG, and FITV…IIMP.

Belongs to the cytochrome b family. As to quaternary structure, the cytochrome bc1 complex contains 3 respiratory subunits (MT-CYB, CYC1 and UQCRFS1), 2 core proteins (UQCRC1 and UQCRC2) and probably 6 low-molecular weight proteins. It depends on heme b as a cofactor.

Its subcellular location is the mitochondrion inner membrane. Functionally, component of the ubiquinol-cytochrome c reductase complex (complex III or cytochrome b-c1 complex) that is part of the mitochondrial respiratory chain. The b-c1 complex mediates electron transfer from ubiquinol to cytochrome c. Contributes to the generation of a proton gradient across the mitochondrial membrane that is then used for ATP synthesis. This Sphyrna lewini (Scalloped hammerhead shark) protein is Cytochrome b (mt-cyb).